We begin with the raw amino-acid sequence, 316 residues long: N-acetyl-gamma-glutamyl-phosphate reductase (316 aa).

The active site involves cysteine 136.

It belongs to the NAGSA dehydrogenase family. Type 1 subfamily.

The protein resides in the cytoplasm. The enzyme catalyses N-acetyl-L-glutamate 5-semialdehyde + phosphate + NADP(+) = N-acetyl-L-glutamyl 5-phosphate + NADPH + H(+). It participates in amino-acid biosynthesis; L-arginine biosynthesis; N(2)-acetyl-L-ornithine from L-glutamate: step 3/4. In terms of biological role, catalyzes the NADPH-dependent reduction of N-acetyl-5-glutamyl phosphate to yield N-acetyl-L-glutamate 5-semialdehyde. This Xanthomonas campestris pv. campestris (strain 8004) protein is N-acetyl-gamma-glutamyl-phosphate reductase.